The sequence spans 432 residues: Guanine nucleotide-binding protein subunit alpha (432 aa).

The tract at residues 1–97 is disordered; that stretch reads MGGCMSTPEA…SKGNKDRSNQ (97 aa). Glycine 2 is lipidated: N-myristoyl glycine. A lipid anchor (S-palmitoyl cysteine) is attached at cysteine 4. Positions 21 to 52 are enriched in low complexity; sequence PSTSTSSRPPQASTSATATAAGAGTSAANGTA. In terms of domain architecture, G-alpha spans 111–432; the sequence is KECKILLLGS…QNALRDSGIL (322 aa). The tract at residues 114–127 is G1 motif; the sequence is KILLLGSGESGKST. 14 residues coordinate GTP: glutamate 122, serine 123, glycine 124, lysine 125, serine 126, threonine 127, aspartate 230, leucine 255, threonine 261, glycine 283, asparagine 349, lysine 350, aspartate 352, and alanine 404. A Mg(2+)-binding site is contributed by serine 126. A G2 motif region spans residues 253 to 261; it reads DVLRARTKT. Threonine 261 contributes to the Mg(2+) binding site. The segment at 276–285 is G3 motif; it reads IHMFDVGGQR. Residues 345-352 form a G4 motif region; sequence ILFLNKID. The tract at residues 402 to 407 is G5 motif; sequence TQATDT.

This sequence belongs to the G-alpha family. As to quaternary structure, g proteins are composed of 3 units; alpha, beta and gamma. The alpha chain contains the guanine nucleotide binding site. Mg(2+) is required as a cofactor.

Its function is as follows. Guanine nucleotide-binding proteins (G proteins) are involved as modulators or transducers in various transmembrane signaling systems. Involved in the mating pathway. The sequence is that of Guanine nucleotide-binding protein subunit alpha (GPA1) from Cryptococcus neoformans var. neoformans serotype D (strain B-3501A) (Filobasidiella neoformans).